The following is a 233-amino-acid chain: Large ribosomal subunit protein uL1 (233 aa).

The protein belongs to the universal ribosomal protein uL1 family. Part of the 50S ribosomal subunit.

Its function is as follows. Binds directly to 23S rRNA. The L1 stalk is quite mobile in the ribosome, and is involved in E site tRNA release. In terms of biological role, protein L1 is also a translational repressor protein, it controls the translation of the L11 operon by binding to its mRNA. The polypeptide is Large ribosomal subunit protein uL1 (Geotalea uraniireducens (strain Rf4) (Geobacter uraniireducens)).